The primary structure comprises 362 residues: Adenosine deaminase (362 aa).

Residues histidine 19 and histidine 21 each contribute to the Zn(2+) site. The substrate site is built by histidine 21, aspartate 23, and glycine 181. Zn(2+) is bound at residue histidine 208. The active-site Proton donor is the glutamate 211. Zn(2+) is bound at residue aspartate 300.

It belongs to the metallo-dependent hydrolases superfamily. Adenosine and AMP deaminases family. Adenosine deaminase subfamily. Zn(2+) serves as cofactor.

The enzyme catalyses adenosine + H2O + H(+) = inosine + NH4(+). The catalysed reaction is 2'-deoxyadenosine + H2O + H(+) = 2'-deoxyinosine + NH4(+). In terms of biological role, catalyzes the hydrolytic deamination of adenosine and 2-deoxyadenosine. The polypeptide is Adenosine deaminase (Mycobacterium leprae (strain TN)).